Here is a 300-residue protein sequence, read N- to C-terminus: Protoheme IX farnesyltransferase (300 aa).

9 helical membrane-spanning segments follow: residues 20–40 (ITKMRLAISVVFSSVAGYFLG), 43–63 (TIDFVTVTLLAIGGYLMVGAS), 94–114 (PVAFTIASAFTVLGLVVLYVI), 116–136 (PKTAMFGAISIFLYVSIYTPL), 142–162 (LSVFVGAFPGAIPFMLGWVAA), 173–193 (LFMIQFFWQFPHFWAIGWWLF), 215–235 (IQIILYTCWTILVSLIPVFGV), 241–261 (LTPVSGIIIFLLGLGMLYYAI), and 276–296 (MFASVSYITLLQIVYVLDKFI).

This sequence belongs to the UbiA prenyltransferase family. Protoheme IX farnesyltransferase subfamily.

The protein resides in the cell membrane. It catalyses the reaction heme b + (2E,6E)-farnesyl diphosphate + H2O = Fe(II)-heme o + diphosphate. It participates in porphyrin-containing compound metabolism; heme O biosynthesis; heme O from protoheme: step 1/1. Its function is as follows. Converts heme B (protoheme IX) to heme O by substitution of the vinyl group on carbon 2 of heme B porphyrin ring with a hydroxyethyl farnesyl side group. The chain is Protoheme IX farnesyltransferase from Christiangramia forsetii (strain DSM 17595 / CGMCC 1.15422 / KT0803) (Gramella forsetii).